The sequence spans 314 residues: Phospho-N-acetylmuramoyl-pentapeptide-transferase (314 aa).

10 helical membrane-spanning segments follow: residues 4 to 24, 52 to 72, 77 to 97, 111 to 131, 146 to 166, 169 to 189, 191 to 211, 219 to 239, 242 to 262, and 294 to 314; these read LIFY…PIFI, TMGG…TYFI, LFLI…LDDY, IQKL…ISIF, LDLK…MSNA, LTDG…LFTA, IAGI…AYLF, IFMG…LALY, VELF…SVII, and IVLI…GGVL.

Belongs to the glycosyltransferase 4 family. MraY subfamily. The cofactor is Mg(2+).

It localises to the cell inner membrane. The enzyme catalyses UDP-N-acetyl-alpha-D-muramoyl-L-alanyl-gamma-D-glutamyl-meso-2,6-diaminopimeloyl-D-alanyl-D-alanine + di-trans,octa-cis-undecaprenyl phosphate = di-trans,octa-cis-undecaprenyl diphospho-N-acetyl-alpha-D-muramoyl-L-alanyl-D-glutamyl-meso-2,6-diaminopimeloyl-D-alanyl-D-alanine + UMP. It participates in cell wall biogenesis; peptidoglycan biosynthesis. Its function is as follows. Catalyzes the initial step of the lipid cycle reactions in the biosynthesis of the cell wall peptidoglycan: transfers peptidoglycan precursor phospho-MurNAc-pentapeptide from UDP-MurNAc-pentapeptide onto the lipid carrier undecaprenyl phosphate, yielding undecaprenyl-pyrophosphoryl-MurNAc-pentapeptide, known as lipid I. This chain is Phospho-N-acetylmuramoyl-pentapeptide-transferase, found in Petrotoga mobilis (strain DSM 10674 / SJ95).